The chain runs to 1371 residues: Probable serine/threonine-protein kinase DDB_G0293292 (1371 aa).

2 consecutive Protein kinase domains span residues 9 to 269 (NKIL…HPNT) and 1131 to 1371 (FKEV…QPTL). Residues 15–23 (IDDGNTKRK) and Lys-39 each bind ATP. Asp-143 acts as the Proton acceptor in catalysis.

Belongs to the protein kinase superfamily. Ser/Thr protein kinase family.

It carries out the reaction L-seryl-[protein] + ATP = O-phospho-L-seryl-[protein] + ADP + H(+). The enzyme catalyses L-threonyl-[protein] + ATP = O-phospho-L-threonyl-[protein] + ADP + H(+). The sequence is that of Probable serine/threonine-protein kinase DDB_G0293292 from Dictyostelium discoideum (Social amoeba).